The sequence spans 340 residues: Putative Ig-like domain-containing protein C1 (340 aa).

Positions 207–294 (PTVTVTGIER…SSPRVMVPTI (88 aa)) constitute an Ig-like domain.

The sequence is that of Putative Ig-like domain-containing protein C1 from Sus scrofa (Pig).